The primary structure comprises 306 residues: Choline-binding protein (306 aa).

Residues 1–22 (MKRKYLKLMIGLALAATLTLSG) form the signal peptide. Cys-23 carries N-palmitoyl cysteine lipidation. Residue Cys-23 is the site of S-diacylglycerol cysteine attachment.

It belongs to the OsmX family.

It localises to the cell membrane. Member of a high affinity multicomponent binding-protein-dependent transport system for choline. The chain is Choline-binding protein (opuBC) from Bacillus subtilis (strain 168).